The following is a 448-amino-acid chain: Tubulin beta chain (448 aa).

GTP-binding residues include glutamine 11, glutamate 69, serine 138, glycine 142, threonine 143, glycine 144, asparagine 204, and asparagine 226. Glutamate 69 is a Mg(2+) binding site. Residues 429–448 form a disordered region; sequence SISDGEEQPYAEEAAYEAEE. The span at 432–448 shows a compositional bias: acidic residues; it reads DGEEQPYAEEAAYEAEE.

The protein belongs to the tubulin family. In terms of assembly, dimer of alpha and beta chains. A typical microtubule is a hollow water-filled tube with an outer diameter of 25 nm and an inner diameter of 15 nM. Alpha-beta heterodimers associate head-to-tail to form protofilaments running lengthwise along the microtubule wall with the beta-tubulin subunit facing the microtubule plus end conferring a structural polarity. Microtubules usually have 13 protofilaments but different protofilament numbers can be found in some organisms and specialized cells. Mg(2+) serves as cofactor.

Its subcellular location is the cytoplasm. The protein resides in the cytoskeleton. Tubulin is the major constituent of microtubules, a cylinder consisting of laterally associated linear protofilaments composed of alpha- and beta-tubulin heterodimers. Microtubules grow by the addition of GTP-tubulin dimers to the microtubule end, where a stabilizing cap forms. Below the cap, tubulin dimers are in GDP-bound state, owing to GTPase activity of alpha-tubulin. The protein is Tubulin beta chain of Aspergillus fumigatus (strain ATCC MYA-4609 / CBS 101355 / FGSC A1100 / Af293) (Neosartorya fumigata).